Consider the following 167-residue polypeptide: Lipoprotein signal peptidase (167 aa).

The next 2 helical transmembrane spans lie at W67–A87 and L91–I111. Residues D118 and D136 contribute to the active site. The helical transmembrane segment at F127–I147 threads the bilayer.

It belongs to the peptidase A8 family.

It localises to the cell inner membrane. The catalysed reaction is Release of signal peptides from bacterial membrane prolipoproteins. Hydrolyzes -Xaa-Yaa-Zaa-|-(S,diacylglyceryl)Cys-, in which Xaa is hydrophobic (preferably Leu), and Yaa (Ala or Ser) and Zaa (Gly or Ala) have small, neutral side chains.. The protein operates within protein modification; lipoprotein biosynthesis (signal peptide cleavage). Functionally, this protein specifically catalyzes the removal of signal peptides from prolipoproteins. This Beijerinckia indica subsp. indica (strain ATCC 9039 / DSM 1715 / NCIMB 8712) protein is Lipoprotein signal peptidase.